We begin with the raw amino-acid sequence, 303 residues long: Probable cell division protein WhiA (303 aa).

The H-T-H motif DNA-binding region spans 272-303 (SIQQIADSLAVPLTKSGVNHRLRKINKIAEDL).

The protein belongs to the WhiA family.

Functionally, involved in cell division and chromosome segregation. The protein is Probable cell division protein WhiA of Streptococcus mutans serotype c (strain ATCC 700610 / UA159).